We begin with the raw amino-acid sequence, 229 residues long: Non-structural protein P8 (229 aa).

Residues 14-26 (MKHNQDRVEELSL) are CCM-I. A CCM-III region spans residues 94–116 (IKRHVNEQILPKLKSDLSELKKK). A run of 2 helical transmembrane segments spans residues 119 to 139 (IIHT…VCTL) and 162 to 182 (SLNP…MVCA). The tract at residues 185 to 198 (ERALNQQIDMIKKE) is CCM-II.

Belongs to the orbivirus NS3 family. As to quaternary structure, forms homooligomers via coiled-coil motif. Interacts with host OPTN; this interaction inhibits innate immune response.

It localises to the host cell membrane. The protein localises to the host Golgi apparatus. In terms of biological role, plays a role in the inhibition of host innate immune response. Interacts with host OPTN and thus inhibits the recruitment of TBK1 to the host Golgi apparatus. In turn, downstream partner IRF3 cannot be activated and IFN-beta production is impaired. Functionally, facilitates viral particle release either by increasing plasma membrane permeability through a viroporin-like activity or by viral budding. The sequence is that of Non-structural protein P8 (Segment-10) from Bluetongue virus 10 (isolate USA) (BTV 10).